Consider the following 766-residue polypeptide: Protein zer-1 homolog (766 aa).

Ala2 is modified (N-acetylalanine). LRR repeat units follow at residues 226 to 245, 246 to 268, and 278 to 302; these read SLVLYNMDLSDDHIRVIVQL, HKLRHLDISRDRLSSYYKFKLTR, and LGNLMSLDISGHMILENCSISKMEE. 5 ARM repeats span residues 427-467, 511-556, 558-600, 602-643, and 714-756; these read RSEQ…NFGI, DNDH…NITD, TPDN…NVAE, KELR…HIMF, and PDKY…HCSN.

Belongs to the zyg-11 family. In terms of assembly, interacts with the ELOC-ELOB/Elongin BC complex. Part of an E3 ubiquitin ligase complex including ZER1, CUL2 and Elongin BC.

In terms of biological role, serves as substrate adapter subunit in the E3 ubiquitin ligase complex ZYG11B-CUL2-Elongin BC. Acts redudantly with ZYG11B to target substrates bearing N-terminal glycine degrons for proteasomal degradation. Involved in the clearance of proteolytic fragments generated by caspase cleavage during apoptosis since N-terminal glycine degrons are strongly enriched at caspase cleavage sites. Also important in the quality control of protein N-myristoylation in which N-terminal glycine degrons are conditionally exposed after a failure of N-myristoylation. The protein is Protein zer-1 homolog (ZER1) of Pongo abelii (Sumatran orangutan).